The chain runs to 833 residues: Leucine--tRNA ligase (833 aa).

The 'HIGH' region motif lies at 41 to 52 (PYPSGAGLHVGH). The short motif at 610–614 (KMSKS) is the 'KMSKS' region element. Lys-613 is an ATP binding site.

The protein belongs to the class-I aminoacyl-tRNA synthetase family.

The protein localises to the cytoplasm. It carries out the reaction tRNA(Leu) + L-leucine + ATP = L-leucyl-tRNA(Leu) + AMP + diphosphate. The protein is Leucine--tRNA ligase of Streptococcus gordonii (strain Challis / ATCC 35105 / BCRC 15272 / CH1 / DL1 / V288).